The chain runs to 84 residues: Large ribosomal subunit protein bL31B (84 aa).

The protein belongs to the bacterial ribosomal protein bL31 family. Type B subfamily. In terms of assembly, part of the 50S ribosomal subunit.

In Streptomyces griseus subsp. griseus (strain JCM 4626 / CBS 651.72 / NBRC 13350 / KCC S-0626 / ISP 5235), this protein is Large ribosomal subunit protein bL31B.